The primary structure comprises 84 residues: MAHKKGQGSTQNNRDSIGRRLGVKKFGGEFVRAGNIIIRQRGTATHAGNNVGMGKDHTIFALIDGFVKFERKDKDRKKVSVYPA.

Belongs to the bacterial ribosomal protein bL27 family.

The chain is Large ribosomal subunit protein bL27 from Campylobacter jejuni subsp. jejuni serotype O:6 (strain 81116 / NCTC 11828).